Consider the following 466-residue polypeptide: Ribulose bisphosphate carboxylase (466 aa).

N111 is a binding site for substrate. Catalysis depends on K166, which acts as the Proton acceptor. K168 is a binding site for substrate. Residues K191, D193, and E194 each coordinate Mg(2+). An N6-carboxylysine modification is found at K191. Catalysis depends on H287, which acts as the Proton acceptor. Residues R288, H321, and S368 each contribute to the substrate site.

Belongs to the RuBisCO large chain family. Type II subfamily. Homodimer. Mg(2+) is required as a cofactor.

It carries out the reaction 2 (2R)-3-phosphoglycerate + 2 H(+) = D-ribulose 1,5-bisphosphate + CO2 + H2O. The catalysed reaction is D-ribulose 1,5-bisphosphate + O2 = 2-phosphoglycolate + (2R)-3-phosphoglycerate + 2 H(+). Functionally, ruBisCO catalyzes two reactions: the carboxylation of D-ribulose 1,5-bisphosphate, the primary event in carbon dioxide fixation, as well as the oxidative fragmentation of the pentose substrate. Both reactions occur simultaneously and in competition at the same active site. The sequence is that of Ribulose bisphosphate carboxylase from Rhodospirillum rubrum (strain ATCC 11170 / ATH 1.1.1 / DSM 467 / LMG 4362 / NCIMB 8255 / S1).